The sequence spans 254 residues: DNA repair protein RecO (254 aa).

This sequence belongs to the RecO family.

Its function is as follows. Involved in DNA repair and RecF pathway recombination. The chain is DNA repair protein RecO from Agrobacterium fabrum (strain C58 / ATCC 33970) (Agrobacterium tumefaciens (strain C58)).